A 125-amino-acid chain; its full sequence is Small ribosomal subunit protein uS12 (125 aa).

Residues 1–31 are disordered; the sequence is MPTINQLVRQGREVETTKSKSPAMQNSPQRR. The segment covering 19-29 has biased composition (polar residues); that stretch reads SKSPAMQNSPQ. A 3-methylthioaspartic acid modification is found at Asp89.

The protein belongs to the universal ribosomal protein uS12 family. Part of the 30S ribosomal subunit. Contacts proteins S8 and S17. May interact with IF1 in the 30S initiation complex.

Its function is as follows. With S4 and S5 plays an important role in translational accuracy. In terms of biological role, interacts with and stabilizes bases of the 16S rRNA that are involved in tRNA selection in the A site and with the mRNA backbone. Located at the interface of the 30S and 50S subunits, it traverses the body of the 30S subunit contacting proteins on the other side and probably holding the rRNA structure together. The combined cluster of proteins S8, S12 and S17 appears to hold together the shoulder and platform of the 30S subunit. The chain is Small ribosomal subunit protein uS12 from Paracidovorax citrulli (strain AAC00-1) (Acidovorax citrulli).